The following is a 608-amino-acid chain: RAS guanyl-releasing protein 2 (608 aa).

Positions 4–126 (TLDLDKGCTV…SLIDIENVPT (123 aa)) constitute an N-terminal Ras-GEF domain. Phosphoserine occurs at positions 116, 117, and 147. A Ras-GEF domain is found at 154–387 (EPLELAAHLT…YQLSLQREPR (234 aa)). The disordered stretch occupies residues 382–407 (LQREPRSKSSPTSPTTCTPPPRPPVL). EF-hand domains follow at residues 426–461 (HIEK…FPYL) and 463–490 (AFGD…SSSM). Residues aspartate 439, aspartate 441, aspartate 443, histidine 445, glutamate 450, aspartate 468, asparagine 470, aspartate 472, cysteine 474, and glutamate 479 each contribute to the Ca(2+) site. A Phorbol-ester/DAG-type zinc finger spans residues 498–548 (VHNFHESNSLRPVACRHCKALILGIYKQGLKCRACGVNCHKQCKDRLSVEC). A phosphoserine mark is found at serine 554 and serine 575. The tract at residues 556-591 (SLEGSAPSPSPTHTHHRAFSFSLPRPGRRGSRPPEI) is disordered.

This sequence belongs to the RASGRP family. As to quaternary structure, forms a signaling complex with RAP1 and BRAF. Interacts with RAP1. Interacts with F-actin.

It localises to the cytoplasm. The protein resides in the cytosol. The protein localises to the cell membrane. Its subcellular location is the synapse. It is found in the synaptosome. It localises to the cell projection. The protein resides in the ruffle membrane. Functions as a calcium- and DAG-regulated nucleotide exchange factor specifically activating Rap through the exchange of bound GDP for GTP. May also activate other GTPases such as RRAS, RRAS2, NRAS, KRAS but not HRAS. Functions in aggregation of platelets and adhesion of T-lymphocytes and neutrophils probably through inside-out integrin activation. May function in the muscarinic acetylcholine receptor M1/CHRM1 signaling pathway. In Bos taurus (Bovine), this protein is RAS guanyl-releasing protein 2 (RASGRP2).